A 56-amino-acid chain; its full sequence is Ovomucoid (56 aa).

In terms of domain architecture, Kazal-like spans 6–56; it reads VDCSEYPKPACTLEYRPLCGSDNKTYGNKCNFCNAVVESNGTLTLSHFGKC. Intrachain disulfides connect Cys-8–Cys-38, Cys-16–Cys-35, and Cys-24–Cys-56. Residue Asn-45 is glycosylated (N-linked (GlcNAc...) asparagine).

It localises to the secreted. The polypeptide is Ovomucoid (Meleagris ocellata (Ocellated turkey)).